The following is a 70-amino-acid chain: Large ribosomal subunit protein bL31 (70 aa).

Residues Cys16, Cys18, Cys37, and Cys40 each coordinate Zn(2+).

Belongs to the bacterial ribosomal protein bL31 family. Type A subfamily. In terms of assembly, part of the 50S ribosomal subunit. Requires Zn(2+) as cofactor.

Its function is as follows. Binds the 23S rRNA. The protein is Large ribosomal subunit protein bL31 of Shewanella frigidimarina (strain NCIMB 400).